The following is a 160-amino-acid chain: Putative pre-16S rRNA nuclease (160 aa).

It belongs to the YqgF nuclease family.

It localises to the cytoplasm. Could be a nuclease involved in processing of the 5'-end of pre-16S rRNA. The sequence is that of Putative pre-16S rRNA nuclease from Cereibacter sphaeroides (strain ATCC 17029 / ATH 2.4.9) (Rhodobacter sphaeroides).